A 199-amino-acid chain; its full sequence is MAAPQPQAAAVSSASGVSGPGSAGGPGPQQQPQPTQLVGSAQSGLLQQQQQDFDPVQRYKMLIPQLKESLQTLMKVAAQNLIQNTNIDNGQKSSDAPLQRFDKCLEEFYALCDQLELCLRLAHECLSQSCDSAKHSPTLVPTATKPDAVQPDSLPYPQYLAVIKAQITCAKDIHTALLDCANKVTGKTTAPSTGPGGSL.

Low complexity predominate over residues 1-17 (MAAPQPQAAAVSSASGV). The interval 1–47 (MAAPQPQAAAVSSASGVSGPGSAGGPGPQQQPQPTQLVGSAQSGLLQ) is disordered. Residue Ala2 is modified to N-acetylalanine. Gly residues predominate over residues 18 to 27 (SGPGSAGGPG). Residues 28–47 (PQQQPQPTQLVGSAQSGLLQ) show a composition bias toward low complexity.

The protein belongs to the Mediator complex subunit 29 family. Component of the Mediator complex, which is composed of MED1, MED4, MED6, MED7, MED8, MED9, MED10, MED11, MED12, MED13, MED13L, MED14, MED15, MED16, MED17, MED18, MED19, MED20, MED21, MED22, MED23, MED24, MED25, MED26, MED27, MED29, MED30, MED31, CCNC, CDK8 and CDC2L6/CDK11. The MED12, MED13, CCNC and CDK8 subunits form a distinct module termed the CDK8 module. Mediator containing the CDK8 module is less active than Mediator lacking this module in supporting transcriptional activation. Individual preparations of the Mediator complex lacking one or more distinct subunits have been variously termed ARC, CRSP, DRIP, PC2, SMCC and TRAP. Associates with the MED18/MED20 heteromer.

Its subcellular location is the nucleus. Component of the Mediator complex, a coactivator involved in the regulated transcription of nearly all RNA polymerase II-dependent genes. Mediator functions as a bridge to convey information from gene-specific regulatory proteins to the basal RNA polymerase II transcription machinery. Mediator is recruited to promoters by direct interactions with regulatory proteins and serves as a scaffold for the assembly of a functional preinitiation complex with RNA polymerase II and the general transcription factors. In Mus musculus (Mouse), this protein is Mediator of RNA polymerase II transcription subunit 29 (Med29).